Reading from the N-terminus, the 417-residue chain is Serine hydroxymethyltransferase (417 aa).

(6S)-5,6,7,8-tetrahydrofolate contacts are provided by residues Leu121 and 125–127 (GHL). At Lys229 the chain carries N6-(pyridoxal phosphate)lysine. 355 to 357 (SPF) lines the (6S)-5,6,7,8-tetrahydrofolate pocket.

It belongs to the SHMT family. Homodimer. The cofactor is pyridoxal 5'-phosphate.

It is found in the cytoplasm. It catalyses the reaction (6R)-5,10-methylene-5,6,7,8-tetrahydrofolate + glycine + H2O = (6S)-5,6,7,8-tetrahydrofolate + L-serine. It participates in one-carbon metabolism; tetrahydrofolate interconversion. The protein operates within amino-acid biosynthesis; glycine biosynthesis; glycine from L-serine: step 1/1. Its function is as follows. Catalyzes the reversible interconversion of serine and glycine with tetrahydrofolate (THF) serving as the one-carbon carrier. This reaction serves as the major source of one-carbon groups required for the biosynthesis of purines, thymidylate, methionine, and other important biomolecules. Also exhibits THF-independent aldolase activity toward beta-hydroxyamino acids, producing glycine and aldehydes, via a retro-aldol mechanism. In Shewanella sp. (strain MR-4), this protein is Serine hydroxymethyltransferase.